We begin with the raw amino-acid sequence, 186 residues long: Quinone reductase (186 aa).

FMN-binding positions include 13–20 (SLRKESYN), 80–83 (EYNR), and serine 116.

The protein belongs to the SsuE family. Homotetramer. Dimer of dimers. The tetrameric configuration has a central role in chromate reductase activity. The cofactor is FMN.

The catalysed reaction is a quinone + NADH + H(+) = a quinol + NAD(+). The enzyme catalyses a quinone + NADPH + H(+) = a quinol + NADP(+). It carries out the reaction Cr(6+) + 2 NADH + O2 = Cr(3+) + superoxide + 2 NAD(+) + 2 H(+). It catalyses the reaction Cr(6+) + 2 NADPH + O2 = Cr(3+) + superoxide + 2 NADP(+) + 2 H(+). May be inhibited by divalent cations. Functionally, catalyzes the reduction of quinones. Acts by simultaneous two-electron transfer, avoiding formation of highly reactive semiquinone intermediates and producing quinols that promote tolerance of H(2)O(2). Quinone reduction is probably the primary biological role of ChrR. Can also reduce toxic chromate to insoluble and less toxic Cr(3+). Catalyzes the transfer of three electrons to Cr(6+) producing Cr(3+) and one electron to molecular oxygen. This reaction produces transiently a minimal amount of the toxic Cr(5+) species and reactive oxygen species (ROS). Chromate reduction protects the cell against chromate toxicity, but is likely a secondary activity. Can also reduce potassium ferricyanide and 2,6-dichloroindophenol. During chromate reduction, displays an eightfold preference for NADH over NADPH. The chain is Quinone reductase from Pseudomonas putida (strain ATCC 47054 / DSM 6125 / CFBP 8728 / NCIMB 11950 / KT2440).